The chain runs to 362 residues: Serine/threonine-protein kinase SBK2 (362 aa).

The segment covering 1 to 11 (MPGKQSEDRPM) has biased composition (basic and acidic residues). The tract at residues 1–20 (MPGKQSEDRPMEVAAVEDGG) is disordered. In terms of domain architecture, Protein kinase spans 62–330 (YEEVRPLGQG…IKSYLGQPWK (269 aa)). ATP-binding positions include 68–76 (LGQGRFGRV) and Lys-91. The active-site Proton acceptor is the Asp-183. A disordered region spans residues 317–362 (PVSSIKSYLGQPWKQREEGAEELTKELREDGSRGGQEAAKGEQPAC). The span at 330 to 348 (KQREEGAEELTKELREDGS) shows a compositional bias: basic and acidic residues.

It belongs to the protein kinase superfamily. Ser/Thr protein kinase family. STKL subfamily.

The catalysed reaction is L-seryl-[protein] + ATP = O-phospho-L-seryl-[protein] + ADP + H(+). The enzyme catalyses L-threonyl-[protein] + ATP = O-phospho-L-threonyl-[protein] + ADP + H(+). In Rattus norvegicus (Rat), this protein is Serine/threonine-protein kinase SBK2 (Sbk2).